Consider the following 472-residue polypeptide: Aspartyl/glutamyl-tRNA(Asn/Gln) amidotransferase subunit B (472 aa).

Belongs to the GatB/GatE family. GatB subfamily. In terms of assembly, heterotrimer of A, B and C subunits.

The catalysed reaction is L-glutamyl-tRNA(Gln) + L-glutamine + ATP + H2O = L-glutaminyl-tRNA(Gln) + L-glutamate + ADP + phosphate + H(+). It carries out the reaction L-aspartyl-tRNA(Asn) + L-glutamine + ATP + H2O = L-asparaginyl-tRNA(Asn) + L-glutamate + ADP + phosphate + 2 H(+). Functionally, allows the formation of correctly charged Asn-tRNA(Asn) or Gln-tRNA(Gln) through the transamidation of misacylated Asp-tRNA(Asn) or Glu-tRNA(Gln) in organisms which lack either or both of asparaginyl-tRNA or glutaminyl-tRNA synthetases. The reaction takes place in the presence of glutamine and ATP through an activated phospho-Asp-tRNA(Asn) or phospho-Glu-tRNA(Gln). This is Aspartyl/glutamyl-tRNA(Asn/Gln) amidotransferase subunit B from Campylobacter jejuni subsp. doylei (strain ATCC BAA-1458 / RM4099 / 269.97).